Consider the following 477-residue polypeptide: Bifunctional protein HldE (477 aa).

Residues 1–318 (MKVTLPEFER…ENAVRGRAET (318 aa)) form a ribokinase region. Residue 195-198 (NLSE) participates in ATP binding. Aspartate 264 is a catalytic residue. The interval 344–477 (MTNGVFDILH…IKKIQKDSDK (134 aa)) is cytidylyltransferase.

It in the N-terminal section; belongs to the carbohydrate kinase PfkB family. In the C-terminal section; belongs to the cytidylyltransferase family. As to quaternary structure, homodimer.

The catalysed reaction is D-glycero-beta-D-manno-heptose 7-phosphate + ATP = D-glycero-beta-D-manno-heptose 1,7-bisphosphate + ADP + H(+). It catalyses the reaction D-glycero-beta-D-manno-heptose 1-phosphate + ATP + H(+) = ADP-D-glycero-beta-D-manno-heptose + diphosphate. The protein operates within nucleotide-sugar biosynthesis; ADP-L-glycero-beta-D-manno-heptose biosynthesis; ADP-L-glycero-beta-D-manno-heptose from D-glycero-beta-D-manno-heptose 7-phosphate: step 1/4. It participates in nucleotide-sugar biosynthesis; ADP-L-glycero-beta-D-manno-heptose biosynthesis; ADP-L-glycero-beta-D-manno-heptose from D-glycero-beta-D-manno-heptose 7-phosphate: step 3/4. Functionally, catalyzes the phosphorylation of D-glycero-D-manno-heptose 7-phosphate at the C-1 position to selectively form D-glycero-beta-D-manno-heptose-1,7-bisphosphate. Catalyzes the ADP transfer from ATP to D-glycero-beta-D-manno-heptose 1-phosphate, yielding ADP-D-glycero-beta-D-manno-heptose. In Klebsiella pneumoniae (strain 342), this protein is Bifunctional protein HldE.